The following is a 305-amino-acid chain: Endonuclease III-like protein 1 (305 aa).

The N-terminal 28 residues, 1 to 28 (MNAAGVRMVVTRARSRGTGASLRRRGEK), are a transit peptide targeting the mitochondrion. The segment at 1–83 (MNAAGVRMVV…HLQAPSWQPQ (83 aa)) is disordered. Ser64 is modified (phosphoserine). In terms of domain architecture, HhH spans 192-216 (RYDGDIPASVAELVALPGVGPKMAH). Lys213 (nucleophile; for N-glycosylase activity) is an active-site residue. [4Fe-4S] cluster is bound by residues Cys283, Cys290, Cys293, and Cys299.

This sequence belongs to the Nth/MutY family. Interacts with YBX1. Interacts with ERCC5/XPG; the interaction stimulates NTHL1 activity and NTHL1 binding to its DNA substrate. It depends on [4Fe-4S] cluster as a cofactor.

The protein resides in the nucleus. The protein localises to the mitochondrion. It catalyses the reaction 2'-deoxyribonucleotide-(2'-deoxyribose 5'-phosphate)-2'-deoxyribonucleotide-DNA = a 3'-end 2'-deoxyribonucleotide-(2,3-dehydro-2,3-deoxyribose 5'-phosphate)-DNA + a 5'-end 5'-phospho-2'-deoxyribonucleoside-DNA + H(+). Its function is as follows. Bifunctional DNA N-glycosylase with associated apurinic/apyrimidinic (AP) lyase function that catalyzes the first step in base excision repair (BER), the primary repair pathway for the repair of oxidative DNA damage. The DNA N-glycosylase activity releases the damaged DNA base from DNA by cleaving the N-glycosidic bond, leaving an AP site. The AP lyase activity cleaves the phosphodiester bond 3' to the AP site by a beta-elimination. Primarily recognizes and repairs oxidative base damage of pyrimidines. The sequence is that of Endonuclease III-like protein 1 from Bos taurus (Bovine).